The primary structure comprises 486 residues: L-arabinose isomerase (486 aa).

Glu299, Glu324, His341, and His440 together coordinate Mn(2+).

The protein belongs to the arabinose isomerase family. Mn(2+) is required as a cofactor.

The enzyme catalyses beta-L-arabinopyranose = L-ribulose. It participates in carbohydrate degradation; L-arabinose degradation via L-ribulose; D-xylulose 5-phosphate from L-arabinose (bacterial route): step 1/3. Catalyzes the conversion of L-arabinose to L-ribulose. This Shouchella clausii (strain KSM-K16) (Alkalihalobacillus clausii) protein is L-arabinose isomerase.